Consider the following 356-residue polypeptide: Thiamine thiazole synthase, chloroplastic (356 aa).

Residues 1–51 constitute a chloroplast transit peptide; sequence MAAMASTAFAPSVSSTTNKLFDSSFHGAPMSPSLLRLQPIKSSRPNNLSIS. Substrate-binding positions include A101, 121 to 122, G129, and A194; that span reads EQ. C223 carries the 2,3-didehydroalanine (Cys) modification. Residues D225, H240, M292, and 302-304 each bind substrate; that span reads RMG.

It belongs to the THI4 family. In terms of assembly, homooctamer. Requires Fe cation as cofactor. In terms of processing, during the catalytic reaction, a sulfide is transferred from Cys-223 to a reaction intermediate, generating a dehydroalanine residue.

It localises to the plastid. Its subcellular location is the chloroplast. It carries out the reaction [ADP-thiazole synthase]-L-cysteine + glycine + NAD(+) = [ADP-thiazole synthase]-dehydroalanine + ADP-5-ethyl-4-methylthiazole-2-carboxylate + nicotinamide + 3 H2O + 2 H(+). Involved in biosynthesis of the thiamine precursor thiazole. Catalyzes the conversion of NAD and glycine to adenosine diphosphate 5-(2-hydroxyethyl)-4-methylthiazole-2-carboxylic acid (ADT), an adenylated thiazole intermediate. The reaction includes an iron-dependent sulfide transfer from a conserved cysteine residue of the protein to a thiazole intermediate. The enzyme can only undergo a single turnover, which suggests it is a suicide enzyme. May have additional roles in adaptation to various stress conditions and in DNA damage tolerance. This is Thiamine thiazole synthase, chloroplastic from Citrus sinensis (Sweet orange).